A 120-amino-acid polypeptide reads, in one-letter code: Large ribosomal subunit protein uL18 (120 aa).

The protein belongs to the universal ribosomal protein uL18 family. As to quaternary structure, part of the 50S ribosomal subunit; part of the 5S rRNA/L5/L18/L25 subcomplex. Contacts the 5S and 23S rRNAs.

Functionally, this is one of the proteins that bind and probably mediate the attachment of the 5S RNA into the large ribosomal subunit, where it forms part of the central protuberance. This Rhizobium etli (strain ATCC 51251 / DSM 11541 / JCM 21823 / NBRC 15573 / CFN 42) protein is Large ribosomal subunit protein uL18.